A 964-amino-acid chain; its full sequence is Siderophore exporter MmpL5 (964 aa).

Helical transmembrane passes span 31–51 (FAVPIILGWLVTIAVLNVTVP), 203–223 (SLQVIEAVTFTVIIVMLLLVY), 230–250 (AIMLTMVVLGLLATRGGVAFL), 255–275 (IIGLSTFATNLLVVLAIAAAT), 302–322 (MFGGTAHVVLGSGLTIAGATF), 340–360 (AIGMVIVVAAALTLGPAIIAV), 389–409 (WPGPILVGAVALALVGLLTLP), 773–793 (TYDLMIAGISALCLIFIIMLI), 803–823 (VIVGTVVLSLGASFGLSVLIW), 826–846 (ILGIELHWLVLAMAVIILLAV), 880–900 (VVTAAGLVFAFTMMSFAVSEL), and 923–943 (SFMTPSIAALLGKWFWWPQVV).

This sequence belongs to the resistance-nodulation-cell division (RND) (TC 2.A.6) family. MmpL subfamily. Interacts with MmpS5.

The protein resides in the cell inner membrane. Functionally, part of an export system, which is required for biosynthesis and secretion of siderophores. The chain is Siderophore exporter MmpL5 (mmpL5) from Mycobacterium tuberculosis (strain CDC 1551 / Oshkosh).